Reading from the N-terminus, the 362-residue chain is DNA polymerase IV (362 aa).

A UmuC domain is found at 6 to 187 (IIHVDMDAFY…LPVSSFHGVG (182 aa)). Residues aspartate 10 and aspartate 105 each coordinate Mg(2+). Glutamate 106 is a catalytic residue.

The protein belongs to the DNA polymerase type-Y family. Monomer. Mg(2+) is required as a cofactor.

It localises to the cytoplasm. The enzyme catalyses DNA(n) + a 2'-deoxyribonucleoside 5'-triphosphate = DNA(n+1) + diphosphate. Functionally, poorly processive, error-prone DNA polymerase involved in untargeted mutagenesis. Copies undamaged DNA at stalled replication forks, which arise in vivo from mismatched or misaligned primer ends. These misaligned primers can be extended by PolIV. Exhibits no 3'-5' exonuclease (proofreading) activity. May be involved in translesional synthesis, in conjunction with the beta clamp from PolIII. The chain is DNA polymerase IV from Leptospira interrogans serogroup Icterohaemorrhagiae serovar Lai (strain 56601).